A 354-amino-acid polypeptide reads, in one-letter code: uncharacterized protein (354 aa).

The protein belongs to the asfivirus B354L family.

This is an uncharacterized protein from Ornithodoros (relapsing fever ticks).